A 1250-amino-acid polypeptide reads, in one-letter code: DNA-directed RNA polymerase subunit beta (1250 aa).

The disordered stretch occupies residues 1139 to 1226; that stretch reads GGAELAKPAP…DLFDEGDEDL (88 aa). 2 stretches are compositionally biased toward acidic residues: residues 1155 to 1183 and 1207 to 1226; these read ESGEAGEESEGEPEEEDVEEIDVPLDPEE and ADDDQEMDEEDLFDEGDEDL.

The protein belongs to the RNA polymerase beta chain family. In terms of assembly, the RNAP catalytic core consists of 2 alpha, 1 beta, 1 beta' and 1 omega subunit. When a sigma factor is associated with the core the holoenzyme is formed, which can initiate transcription.

It carries out the reaction RNA(n) + a ribonucleoside 5'-triphosphate = RNA(n+1) + diphosphate. DNA-dependent RNA polymerase catalyzes the transcription of DNA into RNA using the four ribonucleoside triphosphates as substrates. The chain is DNA-directed RNA polymerase subunit beta from Symbiobacterium thermophilum (strain DSM 24528 / JCM 14929 / IAM 14863 / T).